The following is a 748-amino-acid chain: Catalase-peroxidase (748 aa).

Over residues 1–14 (MTDTSDARPPHSDA) the composition is skewed to basic and acidic residues. Residues 1–40 (MTDTSDARPPHSDAKTASNSESENPAIDSPEPKSHAPLTN) are disordered. The segment at residues 112 to 239 (WHAAGTYRIF…FGATTMGLIY (128 aa)) is a cross-link (tryptophyl-tyrosyl-methioninium (Trp-Tyr) (with M-265)). The active-site Proton acceptor is the His-113. The segment at residues 239 to 265 (YVNPEGPEGKPDPLAAAHDIRETFGRM) is a cross-link (tryptophyl-tyrosyl-methioninium (Tyr-Met) (with W-112)). His-280 is a heme b binding site.

Belongs to the peroxidase family. Peroxidase/catalase subfamily. Homodimer or homotetramer. Requires heme b as cofactor. Formation of the three residue Trp-Tyr-Met cross-link is important for the catalase, but not the peroxidase activity of the enzyme.

The catalysed reaction is H2O2 + AH2 = A + 2 H2O. It catalyses the reaction 2 H2O2 = O2 + 2 H2O. Its function is as follows. Bifunctional enzyme with both catalase and broad-spectrum peroxidase activity. The polypeptide is Catalase-peroxidase (Mycolicibacterium gilvum (strain PYR-GCK) (Mycobacterium gilvum (strain PYR-GCK))).